Reading from the N-terminus, the 358-residue chain is Nicotinate-nucleotide--dimethylbenzimidazole phosphoribosyltransferase (358 aa).

Glutamate 313 acts as the Proton acceptor in catalysis.

This sequence belongs to the CobT family.

It carries out the reaction 5,6-dimethylbenzimidazole + nicotinate beta-D-ribonucleotide = alpha-ribazole 5'-phosphate + nicotinate + H(+). It functions in the pathway nucleoside biosynthesis; alpha-ribazole biosynthesis; alpha-ribazole from 5,6-dimethylbenzimidazole: step 1/2. Its function is as follows. Catalyzes the synthesis of alpha-ribazole-5'-phosphate from nicotinate mononucleotide (NAMN) and 5,6-dimethylbenzimidazole (DMB). This chain is Nicotinate-nucleotide--dimethylbenzimidazole phosphoribosyltransferase, found in Corynebacterium glutamicum (strain R).